The primary structure comprises 234 residues: ATP-dependent dethiobiotin synthetase BioD (234 aa).

12-17 (GAGKTI) contributes to the ATP binding site. A Mg(2+)-binding site is contributed by Thr16. Residue Lys39 is part of the active site. Thr43 is a binding site for substrate. ATP is bound by residues Asp47, 108-111 (EGLG), 168-169 (SC), and 200-202 (PYL). Residues Asp47 and Glu108 each coordinate Mg(2+).

The protein belongs to the dethiobiotin synthetase family. In terms of assembly, homodimer. The cofactor is Mg(2+).

Its subcellular location is the cytoplasm. It catalyses the reaction (7R,8S)-7,8-diammoniononanoate + CO2 + ATP = (4R,5S)-dethiobiotin + ADP + phosphate + 3 H(+). It carries out the reaction (7R,8S)-8-amino-7-(carboxyamino)nonanoate + ATP = (4R,5S)-dethiobiotin + ADP + phosphate + H(+). It functions in the pathway cofactor biosynthesis; biotin biosynthesis; biotin from 7,8-diaminononanoate: step 1/2. Functionally, catalyzes a mechanistically unusual reaction, the ATP-dependent insertion of CO2 between the N7 and N8 nitrogen atoms of 7,8-diaminopelargonic acid (DAPA, also called 7,8-diammoniononanoate) to form a ureido ring. This cyanobacterium does not encode bioA (which catalyzes the formation of the precursor for this reaction in the cannonical pathway), instead it encodes bioU, which replaces bioA and also performs the first half of the cannonical BioD reaction. Thus in this organism BioD has a different substrate. This Rippkaea orientalis (strain PCC 8801 / RF-1) (Cyanothece sp. (strain PCC 8801)) protein is ATP-dependent dethiobiotin synthetase BioD.